Reading from the N-terminus, the 411-residue chain is Glucose-1-phosphate adenylyltransferase (411 aa).

Alpha-D-glucose 1-phosphate-binding positions include Gly162, 177 to 178, and Ser195; that span reads EK.

The protein belongs to the bacterial/plant glucose-1-phosphate adenylyltransferase family. In terms of assembly, homotetramer.

The catalysed reaction is alpha-D-glucose 1-phosphate + ATP + H(+) = ADP-alpha-D-glucose + diphosphate. It participates in glycan biosynthesis; glycogen biosynthesis. Involved in the biosynthesis of ADP-glucose, a building block required for the elongation reactions to produce glycogen. Catalyzes the reaction between ATP and alpha-D-glucose 1-phosphate (G1P) to produce pyrophosphate and ADP-Glc. In Thermodesulfovibrio yellowstonii (strain ATCC 51303 / DSM 11347 / YP87), this protein is Glucose-1-phosphate adenylyltransferase.